A 443-amino-acid polypeptide reads, in one-letter code: Probable cytosolic iron-sulfur protein assembly protein 1 (443 aa).

Disordered regions lie at residues 1-27 (MSDP…WQTA) and 95-124 (REEQ…DDDE). Residues 8–21 (TLSPLATLTPPSSS) show a composition bias toward low complexity. WD repeat units follow at residues 14–57 (TLTP…LLHS) and 61–103 (GHKR…GNED). Residues 113 to 124 (AEDEDGRDDDDE) are compositionally biased toward acidic residues. 6 WD repeats span residues 135 to 174 (GHES…NFET), 180 to 219 (EHDG…WVQV), 221 to 248 (CIAG…KDFR), 255 to 294 (SEEQ…RAEN), 323 to 362 (VHER…QTPN), and 391 to 440 (AHSV…DPPQ).

This sequence belongs to the WD repeat CIA1 family.

Essential component of the cytosolic iron-sulfur (Fe/S) protein assembly machinery. Required for the maturation of extramitochondrial Fe/S proteins. This chain is Probable cytosolic iron-sulfur protein assembly protein 1, found in Phaeosphaeria nodorum (strain SN15 / ATCC MYA-4574 / FGSC 10173) (Glume blotch fungus).